The chain runs to 65 residues: Putative per-hexamer repeat protein 2 (65 aa).

The chain is Putative per-hexamer repeat protein 2 (Phxr2) from Mus musculus (Mouse).